Consider the following 535-residue polypeptide: Alpha-1,3-mannosyl-glycoprotein 4-beta-N-acetylglucosaminyltransferase A (535 aa).

Residues 1–4 (MRLR) are Cytoplasmic-facing. Residues 5-27 (NGTVATALAFITSFLTLSWYTTW) traverse the membrane as a helical; Signal-anchor for type II membrane protein segment. Positions 28–63 (QNGKEKLIAYQREFLALKERLRIAEHRISQRSSELN) form a coiled coil. Over 28-535 (QNGKEKLIAY…NEIHIKKATK (508 aa)) the chain is Lumenal. N-linked (GlcNAc...) asparagine glycans are attached at residues N77 and N458. Residue S474 is modified to Phosphoserine.

It belongs to the glycosyltransferase 54 family. The cofactor is a divalent metal cation. N-glycosylated.

It localises to the golgi apparatus membrane. The protein localises to the secreted. It catalyses the reaction N(4)-{beta-D-GlcNAc-(1-&gt;2)-alpha-D-Man-(1-&gt;3)-[beta-D-GlcNAc-(1-&gt;2)-alpha-D-Man-(1-&gt;6)]-beta-D-Man-(1-&gt;4)-beta-D-GlcNAc-(1-&gt;4)-beta-D-GlcNAc}-L-asparaginyl-[protein] + UDP-N-acetyl-alpha-D-glucosamine = N(4)-{beta-D-GlcNAc-(1-&gt;2)-[beta-D-GlcNAc-(1-&gt;4)]-alpha-D-Man-(1-&gt;3)-[beta-D-GlcNAc-(1-&gt;2)-alpha-D-Man-(1-&gt;6)]-beta-D-Man-(1-&gt;4)-beta-D-GlcNAc-(1-&gt;4)-beta-D-GlcNAc}-L-asparaginyl-[protein] + UDP + H(+). The catalysed reaction is an N(4)-{beta-D-GlcNAc-(1-&gt;2)-alpha-D-Man-(1-&gt;3)-[alpha-D-Man-(1-&gt;6)]-beta-D-Man-(1-&gt;4)-beta-D-GlcNAc-(1-&gt;4)-beta-D-GlcNAc}-L-asparaginyl-[protein] + UDP-N-acetyl-alpha-D-glucosamine = an N(4)-{beta-D-GlcNAc-(1-&gt;2)-[beta-D-GlcNAc-(1-&gt;4)]-alpha-D-Man-(1-&gt;3)-[alpha-D-Man-(1-&gt;6)]-beta-D-Man-(1-&gt;4)-beta-D-GlcNAc-(1-&gt;4)-beta-D-GlcNAc}-L-asparaginyl-[protein] + UDP + H(+). It carries out the reaction an N(4)-{beta-D-GlcNAc-(1-&gt;2)-alpha-D-Man-(1-&gt;3)-[beta-D-GlcNAc-(1-&gt;2)-[beta-D-GlcNAc-(1-&gt;6)]-alpha-D-Man-(1-&gt;6)]-beta-D-Man-(1-&gt;4)-beta-D-GlcNAc-(1-&gt;4)-beta-D-GlcNAc}-L-asparaginyl-[protein] + UDP-N-acetyl-alpha-D-glucosamine = an N(4)-{beta-D-GlcNAc-(1-&gt;2)-[beta-D-GlcNAc-(1-&gt;4)]-alpha-D-Man-(1-&gt;3)-[beta-D-GlcNAc-(1-&gt;2)-[beta-D-GlcNAc-(1-&gt;6)]-alpha-D-Man-(1-&gt;6)]-beta-D-Man-(1-&gt;4)-beta-D-GlcNAc-(1-&gt;4)-beta-D-GlcNAc}-L-asparaginyl-[protein] + UDP + H(+). The enzyme catalyses an N(4)-{beta-D-GlcNAc-(1-&gt;2)-alpha-D-Man-(1-&gt;3)-[beta-D-GlcNAc-(1-&gt;2)-alpha-D-Man-(1-&gt;6)]-beta-D-Man-(1-&gt;4)-beta-D-GlcNAc-(1-&gt;4)-[alpha-L-Fuc-(1-&gt;6)]-beta-D-GlcNAc}-L-asparaginyl-[protein] + UDP-N-acetyl-alpha-D-glucosamine = N(4)-{beta-D-GlcNAc-(1-&gt;2)-[beta-D-GlcNAc-(1-&gt;4)]-alpha-D-Man-(1-&gt;3)-[beta-D-GlcNAc-(1-&gt;2)-alpha-D-Man-(1-&gt;6)]-beta-D-Man-(1-&gt;4)-beta-D-GlcNAc-(1-&gt;4)-[alpha-L-Fuc-(1-&gt;6)]-beta-D-GlcNAc}-asparaginyl-[protein] + UDP + H(+). It catalyses the reaction an N(4)-{beta-D-GlcNAc-(1-&gt;2)-alpha-D-Man-(1-&gt;3)-[beta-D-Gal-(1-&gt;4)-beta-D-GlcNAc-(1-&gt;2)-alpha-D-Man-(1-&gt;6)]-beta-D-Man-(1-&gt;4)-beta-D-GlcNAc-(1-&gt;4)-beta-D-GlcNAc}-L-asparaginyl-[protein] + UDP-N-acetyl-alpha-D-glucosamine = an N(4)-{beta-D-GlcNAc-(1-&gt;2)-[beta-D-GlcNAc-(1-&gt;4)]-alpha-D-Man-(1-&gt;3)-[beta-D-Gal-(1-&gt;4)-beta-D-GlcNAc-(1-&gt;2)-alpha-D-Man-(1-&gt;6)]-beta-D-Man-(1-&gt;4)-beta-D-GlcNAc-(1-&gt;4)-beta-D-GlcNAc}-L-asparaginyl-[protein] + UDP + H(+). The catalysed reaction is N(4)-{beta-D-GlcNAc-(1-&gt;2)-alpha-D-Man-(1-&gt;3)-[alpha-D-Man-(1-&gt;3)-{alpha-D-Man-(1-&gt;6)}-alpha-D-Man-(1-&gt;6)]-beta-D-Man-(1-&gt;4)-beta-D-GlcNAc-(1-&gt;4)-beta-D-GlcNAc}-asparaginyl-[protein] + UDP-N-acetyl-alpha-D-glucosamine = N(4)-{beta-D-GlcNAc-(1-&gt;2)-[beta-D-GlcNAc-(1-&gt;4)]-alpha-D-Man-(1-&gt;3)-[alpha-D-Man-(1-&gt;3)-{alpha-D-Man-(1-&gt;6)}-alpha-D-Man-(1-&gt;6)]-beta-D-Man-(1-&gt;4)-beta-D-GlcNAc-(1-&gt;4)-beta-D-GlcNAc}-asparaginyl-[protein] + UDP + H(+). It carries out the reaction N(4)-{beta-D-GlcNAc-(1-&gt;2)-alpha-D-Man-(1-&gt;3)-beta-D-Man-(1-&gt;4)-beta-D-GlcNAc-(1-&gt;4)-beta-D-GlcNAc}-asparaginyl-[protein] + UDP-N-acetyl-alpha-D-glucosamine = N(4)-{beta-D-GlcNAc-(1-&gt;2)-[beta-D-GlcNAc-(1-&gt;4)]-alpha-D-Man-(1-&gt;3)-beta-D-Man-(1-&gt;4)-beta-D-GlcNAc-(1-&gt;4)-beta-D-GlcNAc}-asparaginyl-[protein] + UDP + H(+). It participates in protein modification; protein glycosylation. With respect to regulation, inhibited by UDP. Its function is as follows. Glycosyltransferase that catalyze the transfer of GlcNAc from UDP-GlcNAc to the GlcNAcbeta1-2Manalpha1-3 arm of the core structure of N-linked glycans through a beta1-4 linkage and participates in the production of tri- and tetra-antennary N-linked sugar chains. Involved in glucose transport by mediating SLC2A2/GLUT2 glycosylation, thereby controlling cell-surface expression of SLC2A2 in pancreatic beta cells. The polypeptide is Alpha-1,3-mannosyl-glycoprotein 4-beta-N-acetylglucosaminyltransferase A (Macaca fascicularis (Crab-eating macaque)).